The primary structure comprises 401 residues: tRNA(Met) cytidine acetate ligase (401 aa).

Residues 7-20, Gly102, Asn164, and Arg189 each bind ATP; that span reads IVEY…HLYH.

It belongs to the TmcAL family.

The protein resides in the cytoplasm. The catalysed reaction is cytidine(34) in elongator tRNA(Met) + acetate + ATP = N(4)-acetylcytidine(34) in elongator tRNA(Met) + AMP + diphosphate. Catalyzes the formation of N(4)-acetylcytidine (ac(4)C) at the wobble position of elongator tRNA(Met), using acetate and ATP as substrates. First activates an acetate ion to form acetyladenylate (Ac-AMP) and then transfers the acetyl group to tRNA to form ac(4)C34. This chain is tRNA(Met) cytidine acetate ligase, found in Thermoanaerobacter pseudethanolicus (strain ATCC 33223 / 39E) (Clostridium thermohydrosulfuricum).